The primary structure comprises 375 residues: Dual-specificity RNA methyltransferase RlmN (375 aa).

Glutamate 93 serves as the catalytic Proton acceptor. The region spanning 99–346 (ETNRGTLCVS…TTTRKTRGDD (248 aa)) is the Radical SAM core domain. A disulfide bond links cysteine 106 and cysteine 351. [4Fe-4S] cluster is bound by residues cysteine 113, cysteine 117, and cysteine 120. S-adenosyl-L-methionine-binding positions include 177–178 (GE), serine 209, 231–233 (SLH), and asparagine 308. Residue cysteine 351 is the S-methylcysteine intermediate of the active site.

The protein belongs to the radical SAM superfamily. RlmN family. [4Fe-4S] cluster serves as cofactor.

It localises to the cytoplasm. The enzyme catalyses adenosine(2503) in 23S rRNA + 2 reduced [2Fe-2S]-[ferredoxin] + 2 S-adenosyl-L-methionine = 2-methyladenosine(2503) in 23S rRNA + 5'-deoxyadenosine + L-methionine + 2 oxidized [2Fe-2S]-[ferredoxin] + S-adenosyl-L-homocysteine. It catalyses the reaction adenosine(37) in tRNA + 2 reduced [2Fe-2S]-[ferredoxin] + 2 S-adenosyl-L-methionine = 2-methyladenosine(37) in tRNA + 5'-deoxyadenosine + L-methionine + 2 oxidized [2Fe-2S]-[ferredoxin] + S-adenosyl-L-homocysteine. Its function is as follows. Specifically methylates position 2 of adenine 2503 in 23S rRNA and position 2 of adenine 37 in tRNAs. m2A2503 modification seems to play a crucial role in the proofreading step occurring at the peptidyl transferase center and thus would serve to optimize ribosomal fidelity. This Azoarcus sp. (strain BH72) protein is Dual-specificity RNA methyltransferase RlmN.